The chain runs to 476 residues: Acidic leucine-rich nuclear phosphoprotein 32-related protein 1 (476 aa).

3 LRR repeats span residues 51–72 (SLEH…PRLR), 73–92 (NLTR…DHLV), and 98–119 (SLRD…SPLA). The LRRCT domain maps to 131–169 (CPVTRVKDYRSKVFGMIRTLKYLDKMDADENERPESDDD). The disordered stretch occupies residues 157–476 (DADENERPES…VEDLRPFKHH (320 aa)). Acidic residues-rich tracts occupy residues 165–194 (ESDD…EDPG), 222–232 (DVDEDESDADE), 252–289 (GDED…EDAV), 299–329 (SDEE…EAEP), 353–371 (EGED…EERL), 379–396 (EGND…EDTE), 415–436 (DAAE…DDGG), and 458–467 (GDDDEDDDGV).

It belongs to the ANP32 family.

This is Acidic leucine-rich nuclear phosphoprotein 32-related protein 1 from Oryza sativa subsp. japonica (Rice).